The chain runs to 279 residues: Tryptophan synthase alpha chain (279 aa).

Residues E50 and D61 each act as proton acceptor in the active site.

The protein belongs to the TrpA family. As to quaternary structure, tetramer of two alpha and two beta chains.

It carries out the reaction (1S,2R)-1-C-(indol-3-yl)glycerol 3-phosphate + L-serine = D-glyceraldehyde 3-phosphate + L-tryptophan + H2O. Its pathway is amino-acid biosynthesis; L-tryptophan biosynthesis; L-tryptophan from chorismate: step 5/5. In terms of biological role, the alpha subunit is responsible for the aldol cleavage of indoleglycerol phosphate to indole and glyceraldehyde 3-phosphate. This is Tryptophan synthase alpha chain from Mesorhizobium japonicum (strain LMG 29417 / CECT 9101 / MAFF 303099) (Mesorhizobium loti (strain MAFF 303099)).